The chain runs to 408 residues: tRNA-specific 2-thiouridylase MnmA (408 aa).

ATP-binding positions include 38 to 45 (GMSGGVDS) and Met-64. The interval 124 to 126 (NPD) is interaction with target base in tRNA. Catalysis depends on Cys-129, which acts as the Nucleophile. A disulfide bridge connects residues Cys-129 and Cys-231. Residue Gly-153 coordinates ATP. The interaction with tRNA stretch occupies residues 181-183 (KDQ). The active-site Cysteine persulfide intermediate is the Cys-231. The segment at 348-349 (RY) is interaction with tRNA.

This sequence belongs to the MnmA/TRMU family.

It localises to the cytoplasm. It catalyses the reaction S-sulfanyl-L-cysteinyl-[protein] + uridine(34) in tRNA + AH2 + ATP = 2-thiouridine(34) in tRNA + L-cysteinyl-[protein] + A + AMP + diphosphate + H(+). Functionally, catalyzes the 2-thiolation of uridine at the wobble position (U34) of tRNA, leading to the formation of s(2)U34. The chain is tRNA-specific 2-thiouridylase MnmA from Psychrobacter cryohalolentis (strain ATCC BAA-1226 / DSM 17306 / VKM B-2378 / K5).